Consider the following 208-residue polypeptide: Small ribosomal subunit protein uS4A (208 aa).

Positions 98 to 159 constitute an S4 RNA-binding domain; it reads SRLDNVAYNM…HAKSYLRIKA (62 aa).

This sequence belongs to the universal ribosomal protein uS4 family. As to quaternary structure, part of the 30S ribosomal subunit. Contacts protein S5. The interaction surface between S4 and S5 is involved in control of translational fidelity.

Functionally, one of the primary rRNA binding proteins, it binds directly to 16S rRNA where it nucleates assembly of the body of the 30S subunit. In terms of biological role, with S5 and S12 plays an important role in translational accuracy. The sequence is that of Small ribosomal subunit protein uS4A (rpsD1) from Nitrosomonas europaea (strain ATCC 19718 / CIP 103999 / KCTC 2705 / NBRC 14298).